The primary structure comprises 315 residues: tRNA-specific adenosine deaminase subunit tad3 (315 aa).

A CMP/dCMP-type deaminase domain is found at 158 to 299 (KRIESILEDL…AELNHRYLAY (142 aa)). Residues His-211, Cys-253, and Cys-256 each contribute to the Zn(2+) site.

This sequence belongs to the cytidine and deoxycytidylate deaminase family. ADAT3 subfamily. In terms of assembly, heterodimer with Tad2.

The protein localises to the cytoplasm. Its subcellular location is the nucleus. Its function is as follows. Structural subunit of tRNA-specific adenosine deaminase, which deaminates adenosine-34 (the first, also called wobble position of the anticodon) to inosine in many tRNAs. Inosine-34 allows the decoding of 3 different nucleotides at the third position of mRNA codons, as inosine is able to pair with U, C, and A. The wobble inosine tRNA modification is essential for cell cycle progression in the G1/S and G2/M transitions in fission yeast. The chain is tRNA-specific adenosine deaminase subunit tad3 (tad3) from Schizosaccharomyces pombe (strain 972 / ATCC 24843) (Fission yeast).